The following is a 283-amino-acid chain: uncharacterized protein (283 aa).

Residues 172–270 (EAIRDYIDER…ERSPSEYRRQ (99 aa)) enclose the HTH araC/xylS-type domain. 2 consecutive DNA-binding regions (H-T-H motif) follow at residues 189–210 (ESVA…QKTG) and 237–260 (VKEV…RKNT).

This is an uncharacterized protein from Escherichia coli (strain K12).